The following is a 370-amino-acid chain: Thiamine-repressible mitochondrial transport protein THI74 (370 aa).

Residues 1–10 (MNRVGIDVDH) are Cytoplasmic-facing. The chain crosses the membrane as a helical span at residues 11–31 (MIGVLLLAVVVVFWVGASCLT). Over 32–42 (NELLETNAYNK) the chain is Mitochondrial intermembrane. A helical transmembrane segment spans residues 43–63 (PFFLTYLNISSFALYLTPDLW). Residues 64-119 (RIIQSRRKSLQERTERTLPIHTQESFSEFLPLLSSTPSTSSNLSSIADTKVKDTMR) are Cytoplasmic-facing. The helical transmembrane segment at 120-140 (LSLLFCVLWFVANLAANAALS) threads the bilayer. In terms of domain architecture, EamA spans 129–190 (FVANLAANAA…SLFGIILIVM (62 aa)). Over 141–146 (YTTVAS) the chain is Mitochondrial intermembrane. A helical transmembrane segment spans residues 147 to 167 (STILSSTSSFFTLFLATSLGI). Over 168 to 169 (ET) the chain is Cytoplasmic. Residues 170–190 (FSTKKLLGLFVSLFGIILIVM) traverse the membrane as a helical segment. Residues 191–203 (QSSKQQDSVSASS) lie on the Mitochondrial intermembrane side of the membrane. The chain crosses the membrane as a helical span at residues 204-224 (FLVGNTLALLGSLGYSVYTTL). Over 225–239 (LKYEISSKGLRLDIQ) the chain is Cytoplasmic. Residues 240–260 (MFLGYVGIFTFLLFWPILIIL) traverse the membrane as a helical segment. Over 261–273 (DITHMETFELPSN) the chain is Mitochondrial intermembrane. Residues 274–294 (FHISFLVMLNCIIIFVSDYFW) traverse the membrane as a helical segment. At 295–303 (CKALILTSP) the chain is on the cytoplasmic side. The helical transmembrane segment at 304–324 (LVVTVALTFTIPLAMFADFVW) threads the bilayer. The Mitochondrial intermembrane portion of the chain corresponds to 325–326 (RE). The chain crosses the membrane as a helical span at residues 327–347 (AFFTPWYIIGVIFIFVSFFLV). Over 348–370 (NHRGESAVEKDCAAVEKGPILDA) the chain is Cytoplasmic.

Its subcellular location is the mitochondrion membrane. Functionally, may be involved in thiaminediphosphate transport across the mitochondrial membrane. The chain is Thiamine-repressible mitochondrial transport protein THI74 (THI74) from Saccharomyces cerevisiae (strain ATCC 204508 / S288c) (Baker's yeast).